Here is a 439-residue protein sequence, read N- to C-terminus: Ornithine aminotransferase, mitochondrial (439 aa).

The transit peptide at 1 to 25 (MLSKLASLQTIAALRRGVHTSVASA) directs the protein to the mitochondrion. An N6-acetyllysine mark is found at K49 and K66. At K102 the chain carries N6-succinyllysine. K107 bears the N6-acetyllysine; alternate mark. K107 is modified (N6-succinyllysine; alternate). K292 carries the post-translational modification N6-(pyridoxal phosphate)lysine. K362 bears the N6-acetyllysine; alternate mark. The residue at position 362 (K362) is an N6-succinyllysine; alternate. An N6-acetyllysine mark is found at K386 and K392. The residue at position 405 (K405) is an N6-acetyllysine; alternate. The residue at position 405 (K405) is an N6-succinyllysine; alternate. The residue at position 421 (K421) is an N6-acetyllysine.

Belongs to the class-III pyridoxal-phosphate-dependent aminotransferase family. In terms of assembly, homohexamer. Pyridoxal 5'-phosphate serves as cofactor.

Its subcellular location is the mitochondrion matrix. The catalysed reaction is L-ornithine + 2-oxoglutarate = L-glutamate 5-semialdehyde + L-glutamate. The protein operates within amino-acid biosynthesis; L-proline biosynthesis; L-glutamate 5-semialdehyde from L-ornithine: step 1/1. Functionally, catalyzes the reversible interconversion of L-ornithine and 2-oxoglutarate to L-glutamate semialdehyde and L-glutamate. The chain is Ornithine aminotransferase, mitochondrial (Oat) from Mus musculus (Mouse).